The sequence spans 615 residues: MAERALEPEAEAEAEAGAGGEAAAEEGAAGRKARGRPRLTESDRARRRLESRKKYDVRRVYLGEAHGPWVDLRRRSGWSDAKLAAYLISLERGQRSGRHGKPWEQVPKKPKRKKRRRRNVNCLKNVVIWYEDHKHRCPYEPHLAELDPTFGLYTTAVWQCEAGHRYFQDLHSPLKPLSDSDPDSDKVGNGLVAGSSDSSSSGSASDSEESPEGQPVKAAAAAAAATPTSPVGSSGLITQEGVHIPFDVHHVESLAEQGTPLCSNPAGNGPEALETVVCVPVPVQVGAGPSALFENVPQEALGEVVASCPMPGMVPGSQVIIIAGPGYDALTAEGIHLNMAAGSGVPGSGLGEEVPCAMMEGVAAYTQTEPEGSQPSTMDATAVAGIETKKEKEDLCLLKKEEKEEPVAPELATTVPESAEPEAEADGEELDGSDMSAIIYEIPKEPEKRRRSKRSRVMDADGLLEMFHCPYEGCSQVYVALSSFQNHVNLVHRKGKTKVCPHPGCGKKFYLSNHLRRHMIIHSGVREFTCETCGKSFKRKNHLEVHRRTHTGETPLQCEICGYQCRQRASLNWHMKKHTAEVQYNFTCDRCGKRFEKLDSVKFHTLKSHPDHKPT.

4 disordered regions span residues 1–48 (MAER…ARRR), 95–117 (RSGR…KRRR), 176–236 (PLSD…SSGL), and 401–432 (EEKE…ELDG). A Nuclear localization signal motif is present at residues 107-118 (PKKPKRKKRRRR). Residues 108-117 (KKPKRKKRRR) are compositionally biased toward basic residues. The span at 193–205 (AGSSDSSSSGSAS) shows a compositional bias: low complexity. Over residues 226-236 (TPTSPVGSSGL) the composition is skewed to polar residues. Over residues 419-432 (AEPEAEADGEELDG) the composition is skewed to acidic residues. Positions 445-451 (EPEKRRR) match the Nuclear localization signal motif. C2H2-type zinc fingers lie at residues 467 to 492 (FHCP…NLVH), 498 to 522 (KVCP…MIIH), 528 to 550 (FTCE…RRTH), 556 to 578 (LQCE…MKKH), and 586 to 609 (FTCD…LKSH).

This sequence belongs to the krueppel C2H2-type zinc-finger protein family. Interacts with NR5A1. In terms of tissue distribution, highly expressed in testis, cerebellum, temporal lobe, hippocampus and the adrenal gland. Moderately expressed in spleen, uterus, thymus, pancreas, kidney, stomach and rectum.

It localises to the nucleus. Its function is as follows. Transcriptional repressor. May repress NR5A1, PPARG, NR1H3, NR4A2, ESR1 and NR3C1 transcriptional activity. This is Zinc finger protein 653 (ZNF653) from Homo sapiens (Human).